A 203-amino-acid polypeptide reads, in one-letter code: CS5 fimbrial subunit (203 aa).

The first 22 residues, 1–22 (MKKNLLITSVLAMATVSGSVLA), serve as a signal peptide directing secretion.

The protein localises to the fimbrium. Major subunit of fimbriae. Fimbriae (also called pili), are polar filaments radiating from the surface of the bacterium to a length of 0.5-1.5 micrometers and numbering 100-300 per cell. They enable bacteria to colonize the epithelium of specific host organs. In Escherichia coli, this protein is CS5 fimbrial subunit.